The chain runs to 129 residues: Transcription antitermination protein NusB (129 aa).

This sequence belongs to the NusB family.

Functionally, involved in transcription antitermination. Required for transcription of ribosomal RNA (rRNA) genes. Binds specifically to the boxA antiterminator sequence of the ribosomal RNA (rrn) operons. The sequence is that of Transcription antitermination protein NusB from Staphylococcus aureus (strain MRSA252).